The sequence spans 92 residues: C-C motif chemokine 4 (92 aa).

The N-terminal stretch at Met-1–Ser-23 is a signal peptide. Cystine bridges form between Cys-34–Cys-58 and Cys-35–Cys-74.

The protein belongs to the intercrine beta (chemokine CC) family. As to quaternary structure, homodimer.

The protein resides in the secreted. Monokine with inflammatory and chemokinetic properties. In Mus musculus (Mouse), this protein is C-C motif chemokine 4 (Ccl4).